Here is a 375-residue protein sequence, read N- to C-terminus: Secreted LysM effector Vd4LysM (375 aa).

A signal peptide spans 1 to 24 (MPSVTISSTMLAGLLLMLVPASSA). A LysM 1 domain is found at 57–104 (SWWWDNEGQIPCANMPAEWGITMQDFLRWNPSITSSCGNFLNGRSYCV). The tract at residues 108–139 (GEEPPVPGTPTTTTAPATTTKPSNGITTPQPI) is disordered. Residues 116–129 (TPTTTTAPATTTKP) are compositionally biased toward low complexity. A LysM 2 domain is found at 149–195 (KFHYISEGDRCQDILSYQKITLADFFKWNPAVKSDCSGLWSKTNACV). Over residues 206–217 (TTTTKPATPTTP) the composition is skewed to low complexity. Positions 206 to 225 (TTTTKPATPTTPSNGITTPQ) are disordered. Residues 237-283 (KFHYISEGDRCQDILSYQKITQADFFKWNPAVKSDCSGLWSKTHACV) form the LysM 3 domain. The tract at residues 287-317 (GGQAPPPTPTTTKPTTTKPPGNGVTTPTPTQ) is disordered. A compositionally biased stretch (low complexity) spans 296–317 (TTTKPTTTKPPGNGVTTPTPTQ). The LysM 4 domain maps to 326–372 (KFHFVSPGNTCQQIVSYQKITMANFVKWNSGAGSGCNNLWGNTHACV).

This sequence belongs to the secreted LysM effector family.

Its function is as follows. Might have a role in sequestration of chitin oligosaccharides (breakdown products of fungal cell walls that are released during invasion and act as triggers of host immunity) to dampen host defense. Does not play an important role during host colonization. This is Secreted LysM effector Vd4LysM from Verticillium dahliae (strain VdLs.17 / ATCC MYA-4575 / FGSC 10137) (Verticillium wilt).